Reading from the N-terminus, the 342-residue chain is MSLLITSLAWGALLDPEVSSASKVALLDAVLEASTLLLRQNGSVRKFLALVAVLCLAEKTGSDNLPALILGSISTAASLSLHLETALRKSCVSNDQAVQTKRAMWILYCIDKSYALRWQTFSLVGDGSLPTTNPPDTALPSEVATTLSLEWLRIRSQYSKICSNILQLGVGAEGEPSENRSNRAVVLSAALEEWYGSVEISQMMLSLEHSDAVHMKLQTSYHYYEARFQLLSISLPDPRSSSPTGSQECREVLRRSIREVITGSNTITSEYLLQDCNHLFIQTLALSMLALDILLESDQGCGKENRALLSIVAGFFARVDIILPQSSIFEEVSNLIEILTYR.

A signal peptide spans 1-20; sequence MSLLITSLAWGALLDPEVSS.

Its pathway is mycotoxin biosynthesis. Its function is as follows. Part of the gene clusters that mediate the biosynthesis of AM-toxins, host-selective toxins (HSTs) causing Alternaria blotch on apple, a worldwide distributed disease. AM-toxins are cyclic depsipeptides containing the 3 residues 2-hydroxy-isovaleric acid (2-HIV), dehydroalanine, L-alanine which are common for all 3 AM-toxins I to III. The fourth precursor is L-alpha-amino-methoxyphenyl-valeric acid (L-Amv) for AM-toxin I, L-alpha-amino-phenyl-valeric acid (L-Apv) for AM-toxin II, and L-alpha-amino-hydroxyphenyl-valeric acid (L-Ahv) for AM-toxin III. AM-toxins have two target sites for affecting susceptible apple cells; they cause invagination of the plasma membrane and electrolyte loss and chloroplast disorganization. The non-ribosomal peptide synthetase AMT1 contains 4 catalytic modules and is responsible for activation of each residue in AM-toxin. The aldo-keto reductase AMT2 catalyzes the conversion of 2-keto-isovaleric acid (2-KIV) to 2-hydroxy-isovaleric acid (2-HIV), one of the precursor residues incorporated by AMT1 during AM-toxin biosynthesis, by reduction of its ketone to an alcohol. The cytochrome P450 monooxygenase AMT3 and the thioesterase AMT4 are also important for AM-toxin production, but their exact function within the AM-toxin biosynthesis are not known yet. Up to 21 proteins (including AMT1 to AMT4) are predicted to be involved in AM-toxin biosynthesis since their expression ishighly up-regulated in AM-toxin-producing cultures. This Alternaria alternata (Alternaria rot fungus) protein is AM-toxin biosynthesis protein 12.